Reading from the N-terminus, the 179-residue chain is Large ribosomal subunit protein bL25 (179 aa).

It belongs to the bacterial ribosomal protein bL25 family. CTC subfamily. In terms of assembly, part of the 50S ribosomal subunit; part of the 5S rRNA/L5/L18/L25 subcomplex. Contacts the 5S rRNA. Binds to the 5S rRNA independently of L5 and L18.

This is one of the proteins that binds to the 5S RNA in the ribosome where it forms part of the central protuberance. The polypeptide is Large ribosomal subunit protein bL25 (Desulfitobacterium hafniense (strain DSM 10664 / DCB-2)).